The following is a 326-amino-acid chain: Protein spaetzle (326 aa).

Positions M1–A25 are cleaved as a signal peptide. N48 carries N-linked (GlcNAc...) asparagine glycosylation. Residues F56 to T82 form a disordered region. Residues K69 to P80 show a composition bias toward polar residues. 2 N-linked (GlcNAc...) asparagine glycosylation sites follow: N114 and N164. Positions Y152–K174 are disordered. Residues L162–K174 show a composition bias toward basic and acidic residues. In terms of domain architecture, Spaetzle spans F228 to A322. 3 cysteine pairs are disulfide-bonded: C230–C288, C267–C319, and C274–C321.

In terms of assembly, homodimer; disulfide-linked. In the presence of Tl, crystal structures show one Tl molecule bound to a spaetzle C-106 homodimer. However, the active complex probably consists of two Tl molecules bound to a spaetzle C-106 homodimer. This is supported by in vitro experiments which also show binding of the spaetzle C-106 dimer to 2 Tl receptors. Ligand binding induces conformational changes in the extracellular domain of Tl. This may enable a secondary homodimerization interface at the C-terminus of the Tl extracellular domain. In terms of processing, during embryonic development proteolytically processed by activated ea/easter; ea cleaves the signal peptide and also generates the C-terminal 12 kDa active ligand for the Toll receptor, C-106 (except for isoform 8.24 and isoform 11.27 as they do not contain the cleavage site). During the immune response, cleaved in the same manner by SPE. Extracellular forms of isoform 8.19 and isoform 11.7 are glycosylated.

The protein localises to the secreted. The activated form, spaetzle C-106, acts as a ligand for the Toll receptor. Binding to Toll activates the Toll signaling pathway and induces expression of the antifungal peptide drosomycin. Component of the extracellular signaling pathway that establishes dorsal-ventral polarity in the embryo. This is Protein spaetzle from Drosophila melanogaster (Fruit fly).